The following is a 971-amino-acid chain: Piwi-like protein 2 (971 aa).

R45 is modified (symmetric dimethylarginine). The residue at position 74 (R74) is an Omega-N-methylarginine; by PRMT5; alternate. Residue R74 is modified to Symmetric dimethylarginine; by PRMT5; alternate. R83 carries the post-translational modification Omega-N-methylarginine; alternate. A symmetric dimethylarginine; alternate mark is found at R83 and R95. R95 is subject to Omega-N-methylarginine; by PRMT5; alternate. R100 carries the post-translational modification Symmetric dimethylarginine; by PRMT5; alternate. Position 100 is an omega-N-methylarginine; alternate (R100). Residues L102–L124 form a disordered region. 2 positions are modified to symmetric dimethylarginine: R144 and R156. Residues S159–P200 form a disordered region. R163 carries the symmetric dimethylarginine; by PRMT5 modification. The 114-residue stretch at S387–G500 folds into the PAZ domain. R549 carries the post-translational modification Symmetric dimethylarginine; by PRMT5. A Piwi domain is found at M666 to H957. Active-site residues include D743, E781, D813, and H946.

The protein belongs to the argonaute family. Piwi subfamily. As to quaternary structure, interacts with DDX4, MAEL, EIF3A, EIF4E, EIF4G, PRMT5 and WDR77. Associates with EIF4E- and EIF4G-containing m7G cap-binding complexes. Interacts (when methylated on arginine residues) with TDRD1 and TDRKH/TDRD2. Interacts with TDRD12. Component of the PET complex, at least composed of EXD1, PIWIL2, TDRD12 and piRNAs. Interacts with MOV10L1. Interacts with GPAT2. Interacts with Tex19.1 and, probably, Tex19.2. Interacts (via PIWI domain) with BMAL1 and CLOCK. Interacts with GSK3B. Interacts with TEX15. The cofactor is Mg(2+). Post-translationally, arginine methylation by PRMT5 is required for the interaction with Tudor domain-containing protein TDRD1 and subsequent localization to the meiotic nuage, also named P granule. In terms of tissue distribution, expressed in adult testis, specifically in spermatocytes and in spermatogonia. Only detected in primordial germ cells of both sexes. Widely expressed in tumors. Also present at early stages of oocyte growth. Present in the mitotic spermatogonia. Not detected in the first stages of meiosis (preleptotene and leptotene). Detected at the late zygotene stage and increases throughout pachytene, declining from this stage onward until expression stops at the early round spermatid stage (at protein level).

It localises to the cytoplasm. In terms of biological role, endoribonuclease that plays a central role during spermatogenesis by repressing transposable elements and preventing their mobilization, which is essential for the germline integrity. Plays an essential role in meiotic differentiation of spermatocytes, germ cell differentiation and in self-renewal of spermatogonial stem cells. Its presence in oocytes suggests that it may participate in similar functions during oogenesis in females. Acts via the piRNA metabolic process, which mediates the repression of transposable elements during meiosis by forming complexes composed of piRNAs and Piwi proteins and govern the methylation and subsequent repression of transposons. During piRNA biosynthesis, plays a key role in the piRNA amplification loop, also named ping-pong amplification cycle, by acting as a 'slicer-competent' piRNA endoribonuclease that cleaves primary piRNAs, which are then loaded onto 'slicer-incompetent' PIWIL4. PIWIL2 slicing produces a pre-miRNA intermediate, which is then processed in mature piRNAs, and as well as a 16 nucleotide by-product that is degraded. Required for PIWIL4/MIWI2 nuclear localization and association with secondary piRNAs antisense. Besides their function in transposable elements repression, piRNAs are probably involved in other processes during meiosis such as translation regulation. Indirectly modulates expression of genes such as PDGFRB, SLC2A1, ITGA6, GJA7, THY1, CD9 and STRA8. Represses circadian rhythms by promoting the stability and activity of core clock components BMAL1 and CLOCK by inhibiting GSK3B-mediated phosphorylation and ubiquitination-dependent degradation of these proteins. The chain is Piwi-like protein 2 from Mus musculus (Mouse).